We begin with the raw amino-acid sequence, 316 residues long: Cytochrome c oxidase assembly protein COX18, mitochondrial (316 aa).

The chain crosses the membrane as a helical span at residues 164–184 (WKNALLPMVQIPLWVTVSMGI). At 185–213 (RTLTETQLIESFYPSWFSALGFSSFDLSS) the chain is on the mitochondrial matrix side. Residues 214 to 234 (PLVAMPLLAPILVGTLAVLNV) form a helical membrane-spanning segment. Residues 235–274 (ELNGRLMFSSSLSSQGIKTISRNSTRVQEAMTSILNVSRL) are Mitochondrial intermembrane-facing. The helical transmembrane segment at 275-295 (GCVVMLAMSSQAPFLLSLYWI) threads the bilayer. Residues 296-316 (SSQLFSLVQNIILNWIYPYQR) are Mitochondrial matrix-facing.

This sequence belongs to the OXA1/ALB3/YidC family. Interacts with PNT1 and MSS2.

The protein localises to the mitochondrion inner membrane. In terms of biological role, required for the insertion of integral membrane proteins into the mitochondrial inner membrane. Essential for the activity and assembly of cytochrome c oxidase. Plays a central role in the translocation and export of the C-terminal part of the COX2 protein into the mitochondrial intermembrane space. This is Cytochrome c oxidase assembly protein COX18, mitochondrial (COX18) from Saccharomyces cerevisiae (strain ATCC 204508 / S288c) (Baker's yeast).